We begin with the raw amino-acid sequence, 280 residues long: Protein HEAT-INDUCED TAS1 TARGET 4 (280 aa).

The protein belongs to the heat induced plant HTT protein family. As to expression, expressed in seedlings, leaves, stems, inflorescences and siliques.

It localises to the cytoplasm. It is found in the nucleus. Mediates both basal and acquired thermotolerance. The protein is Protein HEAT-INDUCED TAS1 TARGET 4 of Arabidopsis thaliana (Mouse-ear cress).